The following is a 309-amino-acid chain: Pyrroline-5-carboxylate reductase 1, mitochondrial (309 aa).

Ser-2 is modified (N-acetylserine). Residues Ile-6–Leu-11 and Ser-34 contribute to the NADP(+) site. The NADPH site is built by Ala-8, Gln-10, Leu-11, Ser-34, Asp-36, Asn-56, Val-70, Lys-71, and Ala-97. NADP(+)-binding positions include Asn-56, Ala-69–Pro-72, and Cys-95–Ala-97. Residue Glu-164 coordinates L-proline. Position 230 (Asn-230) interacts with NADPH. L-proline is bound by residues Ala-237 and Thr-238. Phosphoserine is present on residues Ser-278 and Ser-301.

This sequence belongs to the pyrroline-5-carboxylate reductase family. Homodecamer; composed of 5 homodimers. Interacts with LTO1. Highly expressed in osteoblasts and skin.

It localises to the mitochondrion. The enzyme catalyses L-proline + NADP(+) = (S)-1-pyrroline-5-carboxylate + NADPH + 2 H(+). The catalysed reaction is L-proline + NAD(+) = (S)-1-pyrroline-5-carboxylate + NADH + 2 H(+). It participates in amino-acid biosynthesis; L-proline biosynthesis; L-proline from L-glutamate 5-semialdehyde: step 1/1. In terms of biological role, oxidoreductase that catalyzes the last step in proline biosynthesis, which corresponds to the reduction of pyrroline-5-carboxylate to L-proline using NAD(P)H. At physiologic concentrations, has higher specific activity in the presence of NADH. Involved in the cellular response to oxidative stress. The chain is Pyrroline-5-carboxylate reductase 1, mitochondrial from Mus musculus (Mouse).